A 277-amino-acid polypeptide reads, in one-letter code: Inner kinetochore subunit sim4 (277 aa).

Residues 96–138 adopt a coiled-coil conformation; it reads NNISDLKKNLHSNKKLEAVLKEELHQIKKFSSDLQSLKSSMGE.

Belongs to the CENP-K/MCM22 family. Component of the inner kinetochore constitutive centromere-associated network (CCAN) (also known as central kinetochore Sim4 complex in fission yeast), which is composed of at least cnl2, cnp3, cnp20, fta1, fta2, fta3, fta4, fta6, fta7, mal2, mhf1, mhf2, mis6, mis15, mis17, sim4 and wip1. Interacts with mis6 and dad1.

Its subcellular location is the nucleus. The protein resides in the chromosome. It is found in the centromere. Its function is as follows. Component of the kinetochore, a multiprotein complex that assembles on centromeric DNA and attaches chromosomes to spindle microtubules, mediating chromosome segregation and sister chromatid segregation during meiosis and mitosis. Component of the inner kinetochore constitutive centromere-associated network (CCAN), which serves as a structural platform for outer kinetochore assembly. This chain is Inner kinetochore subunit sim4 (sim4), found in Schizosaccharomyces pombe (strain 972 / ATCC 24843) (Fission yeast).